We begin with the raw amino-acid sequence, 150 residues long: Large ribosomal subunit protein bL9 (150 aa).

It belongs to the bacterial ribosomal protein bL9 family.

Binds to the 23S rRNA. The sequence is that of Large ribosomal subunit protein bL9 from Photorhabdus laumondii subsp. laumondii (strain DSM 15139 / CIP 105565 / TT01) (Photorhabdus luminescens subsp. laumondii).